We begin with the raw amino-acid sequence, 500 residues long: Probable cytosol aminopeptidase (500 aa).

Lysine 264 and aspartate 269 together coordinate Mn(2+). Lysine 276 is an active-site residue. 3 residues coordinate Mn(2+): aspartate 287, aspartate 346, and glutamate 348. The active site involves arginine 350.

The protein belongs to the peptidase M17 family. The cofactor is Mn(2+).

The protein localises to the cytoplasm. It carries out the reaction Release of an N-terminal amino acid, Xaa-|-Yaa-, in which Xaa is preferably Leu, but may be other amino acids including Pro although not Arg or Lys, and Yaa may be Pro. Amino acid amides and methyl esters are also readily hydrolyzed, but rates on arylamides are exceedingly low.. The catalysed reaction is Release of an N-terminal amino acid, preferentially leucine, but not glutamic or aspartic acids.. In terms of biological role, presumably involved in the processing and regular turnover of intracellular proteins. Catalyzes the removal of unsubstituted N-terminal amino acids from various peptides. This Rhodopseudomonas palustris (strain TIE-1) protein is Probable cytosol aminopeptidase.